Reading from the N-terminus, the 700-residue chain is Methionine--tRNA ligase (700 aa).

The 'HIGH' region motif lies at 13 to 23; that stretch reads PYANGDIHLGH. Positions 144, 147, 157, and 160 each coordinate Zn(2+). Positions 341–345 match the 'KMSKS' region motif; sequence KMSKS. An ATP-binding site is contributed by Lys344. The segment at 562–587 is disordered; sequence QVGAPTASQDDKAAAKNTSPAAMPSS. Over residues 577–587 the composition is skewed to polar residues; sequence KNTSPAAMPSS. Residues 598 to 700 form the tRNA-binding domain; it reads DFAKVEMKVA…DEAVIGDSLA (103 aa).

The protein belongs to the class-I aminoacyl-tRNA synthetase family. MetG type 1 subfamily. As to quaternary structure, homodimer. Requires Zn(2+) as cofactor.

It is found in the cytoplasm. It carries out the reaction tRNA(Met) + L-methionine + ATP = L-methionyl-tRNA(Met) + AMP + diphosphate. Its function is as follows. Is required not only for elongation of protein synthesis but also for the initiation of all mRNA translation through initiator tRNA(fMet) aminoacylation. The sequence is that of Methionine--tRNA ligase from Psychrobacter cryohalolentis (strain ATCC BAA-1226 / DSM 17306 / VKM B-2378 / K5).